Reading from the N-terminus, the 725-residue chain is MSQSNMVPVANNGDNNNDNENNNNNNNNGGTDNTNAGNDSGDQDFDSGNTSSGNHGEGLGNNQAPRHKKKKYNRHTQLQISEMEAFFRECPHPDDKQRYDLSAQLGLDPVQIKFWFQNKRTQNKNQQERFENSELRNLNNHLRSENQRLREAIHQALCPKCGGQTAIGEMTFEEHHLRILNARLTEEIKQLSVTAEKISRLTGIPVRSHPRVSPPNPPPNFEFGMGSKGNVGNHSRETTGPADANTKPIIMELAFGAMEELLVMAQVAEPLWMGGFNGTSLALNLDEYEKTFRTGLGPRLGGFRTEASRETALVAMCPTGIVEMLMQENLWSTMFAGIVGRARTHEQIMADAAGNFNGNLQIMSAEYQVLSPLVTTRESYFVRYCKQQGEGLWAVVDISIDHLLPNINLKCRRRPSGCLIQEMHSGYSKVTWVEHVEVDDAGSYSIFEKLICTGQAFAANRWVGTLVRQCERISSILSTDFQSVDSGDHITLTNHGKMSMLKIAERIARTFFAGMTNATGSTIFSGVEGEDIRVMTMKSVNDPGKPPGVIICAATSFWLPAPPNTVFDFLREATHRHNWDVLCNGEMMHKIAEITNGIDKRNCASLLRHGHTSKSKMMIVQETSTDPTASFVLYAPVDMTSMDITLHGGGDPDFVVILPSGFAIFPDGTGKPGGKEGGSLLTISFQMLVESGPEARLSVSSVATTENLIRTTVRRIKDLFPCQTA.

The tract at residues 1–74 (MSQSNMVPVA…PRHKKKKYNR (74 aa)) is disordered. Low complexity predominate over residues 11–40 (NNGDNNNDNENNNNNNNNGGTDNTNAGNDS). The span at 46 to 64 (DSGNTSSGNHGEGLGNNQA) shows a compositional bias: polar residues. Basic residues predominate over residues 65 to 74 (PRHKKKKYNR). The segment at residues 68–127 (KKKKYNRHTQLQISEMEAFFRECPHPDDKQRYDLSAQLGLDPVQIKFWFQNKRTQNKNQQ) is a DNA-binding region (homeobox). The stretch at 117-201 (QNKRTQNKNQ…SVTAEKISRL (85 aa)) forms a coiled coil. The START domain maps to 243 to 475 (DANTKPIIME…LVRQCERISS (233 aa)).

The protein belongs to the HD-ZIP homeobox family. Class IV subfamily. In terms of assembly, interacts with AIL7/PLT7, ANT, BBM and AIL1. As to expression, expressed in siliques.

It localises to the nucleus. Probable transcription factor. Seems to promote cell differentiation. The sequence is that of Homeobox-leucine zipper protein HDG3 from Arabidopsis thaliana (Mouse-ear cress).